Here is an 837-residue protein sequence, read N- to C-terminus: Outer membrane usher protein PsaC (837 aa).

Positions 1-23 (MKKLIVQFTTITLLMSTSFLVGA) are cleaved as a signal peptide.

Belongs to the fimbrial export usher family.

The protein localises to the cell outer membrane. Functionally, involved in the export and assembly of PsaA (pH 6) fimbrial subunits across the outer membrane. The chain is Outer membrane usher protein PsaC (psaC) from Yersinia pestis.